Consider the following 359-residue polypeptide: Membrane-bound lytic murein transglycosylase C (359 aa).

An N-terminal signal peptide occupies residues 1-16 (MKKYLALALIAPLLIS). The N-palmitoyl cysteine moiety is linked to residue Cys17. Cys17 carries S-diacylglycerol cysteine lipidation.

Belongs to the transglycosylase Slt family.

Its subcellular location is the cell outer membrane. It carries out the reaction Exolytic cleavage of the (1-&gt;4)-beta-glycosidic linkage between N-acetylmuramic acid (MurNAc) and N-acetylglucosamine (GlcNAc) residues in peptidoglycan, from either the reducing or the non-reducing ends of the peptidoglycan chains, with concomitant formation of a 1,6-anhydrobond in the MurNAc residue.. Its function is as follows. Murein-degrading enzyme. May play a role in recycling of muropeptides during cell elongation and/or cell division. This is Membrane-bound lytic murein transglycosylase C from Escherichia coli O7:K1 (strain IAI39 / ExPEC).